The sequence spans 245 residues: 1-(5-phosphoribosyl)-5-[(5-phosphoribosylamino)methylideneamino] imidazole-4-carboxamide isomerase (245 aa).

The active-site Proton acceptor is aspartate 7. The active-site Proton donor is aspartate 129.

Belongs to the HisA/HisF family.

Its subcellular location is the cytoplasm. It carries out the reaction 1-(5-phospho-beta-D-ribosyl)-5-[(5-phospho-beta-D-ribosylamino)methylideneamino]imidazole-4-carboxamide = 5-[(5-phospho-1-deoxy-D-ribulos-1-ylimino)methylamino]-1-(5-phospho-beta-D-ribosyl)imidazole-4-carboxamide. It functions in the pathway amino-acid biosynthesis; L-histidine biosynthesis; L-histidine from 5-phospho-alpha-D-ribose 1-diphosphate: step 4/9. This chain is 1-(5-phosphoribosyl)-5-[(5-phosphoribosylamino)methylideneamino] imidazole-4-carboxamide isomerase, found in Salmonella enteritidis PT4 (strain P125109).